The following is a 198-amino-acid chain: FMN-dependent NADH:quinone oxidoreductase (198 aa).

FMN contacts are provided by residues S10, 16–18 (SQS), 94–97 (MYNF), and 138–141 (TRGG).

The protein belongs to the azoreductase type 1 family. In terms of assembly, homodimer. Requires FMN as cofactor.

It carries out the reaction 2 a quinone + NADH + H(+) = 2 a 1,4-benzosemiquinone + NAD(+). It catalyses the reaction N,N-dimethyl-1,4-phenylenediamine + anthranilate + 2 NAD(+) = 2-(4-dimethylaminophenyl)diazenylbenzoate + 2 NADH + 2 H(+). Its function is as follows. Quinone reductase that provides resistance to thiol-specific stress caused by electrophilic quinones. In terms of biological role, also exhibits azoreductase activity. Catalyzes the reductive cleavage of the azo bond in aromatic azo compounds to the corresponding amines. This is FMN-dependent NADH:quinone oxidoreductase from Shewanella oneidensis (strain ATCC 700550 / JCM 31522 / CIP 106686 / LMG 19005 / NCIMB 14063 / MR-1).